The primary structure comprises 309 residues: Ferredoxin--NADP reductase (309 aa).

The FAD site is built by aspartate 25, glutamine 33, tyrosine 38, valine 77, phenylalanine 107, aspartate 267, and threonine 307.

The protein belongs to the ferredoxin--NADP reductase type 2 family. As to quaternary structure, homodimer. The cofactor is FAD.

The catalysed reaction is 2 reduced [2Fe-2S]-[ferredoxin] + NADP(+) + H(+) = 2 oxidized [2Fe-2S]-[ferredoxin] + NADPH. The protein is Ferredoxin--NADP reductase of Lactobacillus acidophilus (strain ATCC 700396 / NCK56 / N2 / NCFM).